We begin with the raw amino-acid sequence, 143 residues long: Deoxyuridine 5'-triphosphate nucleotidohydrolase (143 aa).

Residues 63 to 65 (RSG), Asn76, 80 to 82 (TID), and Lys90 each bind substrate.

This sequence belongs to the dUTPase family. Requires Mg(2+) as cofactor.

It carries out the reaction dUTP + H2O = dUMP + diphosphate + H(+). It functions in the pathway pyrimidine metabolism; dUMP biosynthesis; dUMP from dCTP (dUTP route): step 2/2. In terms of biological role, this enzyme is involved in nucleotide metabolism: it produces dUMP, the immediate precursor of thymidine nucleotides and it decreases the intracellular concentration of dUTP so that uracil cannot be incorporated into DNA. The chain is Deoxyuridine 5'-triphosphate nucleotidohydrolase from Finegoldia magna (strain ATCC 29328 / DSM 20472 / WAL 2508) (Peptostreptococcus magnus).